Here is a 331-residue protein sequence, read N- to C-terminus: Adenosine deaminase (331 aa).

H12 and H14 together coordinate Zn(2+). Substrate contacts are provided by H14, D16, and G170. Zn(2+) is bound at residue H197. The active-site Proton donor is the E200. Residue D278 coordinates Zn(2+). D279 serves as a coordination point for substrate.

Belongs to the metallo-dependent hydrolases superfamily. Adenosine and AMP deaminases family. Adenosine deaminase subfamily. It depends on Zn(2+) as a cofactor.

The catalysed reaction is adenosine + H2O + H(+) = inosine + NH4(+). It catalyses the reaction 2'-deoxyadenosine + H2O + H(+) = 2'-deoxyinosine + NH4(+). Functionally, catalyzes the hydrolytic deamination of adenosine and 2-deoxyadenosine. The protein is Adenosine deaminase of Shewanella sp. (strain W3-18-1).